Consider the following 1031-residue polypeptide: LRR receptor-like serine/threonine-protein kinase EFR (1031 aa).

The first 24 residues, 1-24 (MKLSFSLVFNALTLLLQVCIFAQA), serve as a signal peptide directing secretion. The Extracellular segment spans residues 25-653 (RFSNETDMQA…LSVRKKVVSG (629 aa)). 3 N-linked (GlcNAc...) asparagine glycosylation sites follow: Asn28, Asn55, and Asn95. LRR repeat units follow at residues 98–120 (FLRL…VGRL), 122–144 (RLQY…LSNC), 146–168 (RLST…LGSL), 170–193 (KLAI…GNLT), 194–216 (SLQK…VARL), 218–240 (QMVF…LYNI), 242–264 (SLES…FGYL), 267–289 (NLRR…LANI), 291–312 (SLER…SFGK), and 315–335 (NLWW…SGLE). Residues Asn127 and Asn143 are each glycosylated (N-linked (GlcNAc...) asparagine). N-linked (GlcNAc...) asparagine glycans are attached at residues Asn180 and Asn191. Asn239 carries an N-linked (GlcNAc...) asparagine glycan. Residue Asn288 is glycosylated (N-linked (GlcNAc...) asparagine). 4 N-linked (GlcNAc...) asparagine glycosylation sites follow: Asn323, Asn329, Asn342, and Asn366. LRR repeat units lie at residues 345–368 (QLEY…ANLS), 370–392 (TLTS…IGNL), 394–416 (SLQE…FGKL), 418–440 (NLQV…FGNM), 442–464 (RLQK…LGRC), 466–487 (YLLD…EILQ), 490–512 (SLAY…VGKL), 514–536 (LLVG…IGGC), 538–560 (SMEF…SRLV), 561–584 (SLKN…ASLP), and 585–597 (SLRN…NKFE). A glycan (N-linked (GlcNAc...) asparagine) is linked at Asn439. Residue Asn478 is glycosylated (N-linked (GlcNAc...) asparagine). N-linked (GlcNAc...) asparagine glycans are attached at residues Asn571, Asn590, and Asn608. Residues 654 to 674 (ICIGIASLLLIIIVASLCWFM) form a helical membrane-spanning segment. At 675–1031 (KRKKKNNASD…WMLNTDMHTM (357 aa)) the chain is on the cytoplasmic side. Residue Thr709 is modified to Phosphothreonine. Residues 712 to 1001 (FSSTNLIGSG…ELISIRSKFF (290 aa)) enclose the Protein kinase domain. ATP contacts are provided by residues 718-726 (IGSGNFGNV) and Lys741. A phosphotyrosine mark is found at Tyr791 and Tyr836. The Proton acceptor role is filled by Asp849. The residue at position 897 (Tyr897) is a Phosphotyrosine. The span at 1005 to 1020 (TTITESPRDAPQSSPQ) shows a compositional bias: polar residues. The disordered stretch occupies residues 1005-1031 (TTITESPRDAPQSSPQEWMLNTDMHTM).

This sequence belongs to the protein kinase superfamily. Ser/Thr protein kinase family. In terms of assembly, binds to Pseudomonas syringae AvrPto1 and (via the kinase and cytoplasmic domains) to hopD2. Interacts with SERK3/BAK1, SERK4/BKK1, SERK1 and SERK2 in a specific ligand-induced manner. Binds to IOS1. Binds to BIK1 in the absence of pathogen elicitor; dissociates upon pathogen-associated molecular pattern (PAMP)-triggered activation. Post-translationally, autophosphorylated after elicitation with elfl18. Autophosphorylation is inhibited by the binding with avrPto1. Phosphorylation at T-836 is required for immune signaling. In terms of processing, polyubiquitinated at the kinase domain mediated by P.syringae AvrPtoB.

It is found in the cell membrane. The protein resides in the endomembrane system. The catalysed reaction is L-seryl-[protein] + ATP = O-phospho-L-seryl-[protein] + ADP + H(+). It catalyses the reaction L-threonyl-[protein] + ATP = O-phospho-L-threonyl-[protein] + ADP + H(+). Constitutes the pattern-recognition receptor (PPR) that determines the specific perception of elongation factor Tu (EF-Tu), a potent elicitor of the defense response to pathogen-associated molecular patterns (PAMPs); phosphorylates BIK1 upon elicitation to regulate immune responses such as defense hormone expression (e.g. jasmonic acid (JA) and salicylic acid (SA)). Reduces transformation by Rhizobium radiobacter probably by inducing plant defense during the interaction. Binding to the effector AvrPto1 from P.syringae blocks the downstream plant immune response while interaction with hopD2 decreases the phosphorylation level of EFR upon elf18 treatment. Specific endoplasmic reticulum quality control components (ERD2B, CRT3, UGGT and STT3A) are required for the biogenesis of EFR. This is LRR receptor-like serine/threonine-protein kinase EFR from Arabidopsis thaliana (Mouse-ear cress).